We begin with the raw amino-acid sequence, 369 residues long: Methionine aminopeptidase 1B, chloroplastic (369 aa).

Residues 1 to 61 constitute a chloroplast transit peptide; that stretch reads MASSVFLSSF…YSPRQFHVSA (61 aa). Histidine 199 contributes to the substrate binding site. 3 residues coordinate a divalent metal cation: aspartate 216, aspartate 227, and histidine 290. A substrate-binding site is contributed by histidine 297. A divalent metal cation contacts are provided by glutamate 322 and glutamate 353.

Belongs to the peptidase M24A family. Methionine aminopeptidase type 1 subfamily. Requires Co(2+) as cofactor. The cofactor is Zn(2+). It depends on Mn(2+) as a cofactor. Fe(2+) is required as a cofactor. Ubiquitous. Preferentially expressed in green tissues.

It is found in the plastid. Its subcellular location is the chloroplast. It catalyses the reaction Release of N-terminal amino acids, preferentially methionine, from peptides and arylamides.. In terms of biological role, removes the N-terminal methionine from nascent proteins. The N-terminal methionine is often cleaved when the second residue in the primary sequence is small and uncharged (Met-Ala-, Cys, Gly, Pro, Ser, Thr, or Val). The chain is Methionine aminopeptidase 1B, chloroplastic (MAP1B) from Arabidopsis thaliana (Mouse-ear cress).